A 155-amino-acid polypeptide reads, in one-letter code: MASLKCSTVVCVICLEKPKYRCPACRVPYCSVVCFRKHKEQCNPETRPVEKKIRSALPTKTVKPVENKDDDDSIADFLNSDEEEDRVSLQNLKNLGESATLRSLLLNPHLRQLMVNLDQGEDKAKLMRAYMQEPLFVEFADCCLGIVEPSQNEES.

Zn(2+) is bound by residues Cys11, Cys14, Cys22, Cys25, Cys30, Cys34, His38, and Cys42. The HIT-type zinc finger occupies 11 to 42 (CVICLEKPKYRCPACRVPYCSVVCFRKHKEQC). Position 80 is a phosphoserine (Ser80).

As to quaternary structure, thyroid receptor interacting proteins (TRIPs) specifically interact with the ligand binding domain of the thyroid receptor (TR). Requires the presence of thyroid hormone for its interaction. Interacts with NUFIP1. Interacts (via HIT-type zinc finger) with the RUVBL1/RUVBL2 complex in the presence of ADP.

It localises to the cytoplasm. The protein resides in the nucleus. The sequence is that of Zinc finger HIT domain-containing protein 3 (ZNHIT3) from Homo sapiens (Human).